Here is a 571-residue protein sequence, read N- to C-terminus: Chitin-inducible gibberellin-responsive protein 1 (571 aa).

Polar residues predominate over residues 61-77 (TNTPDNQSSTETISAQP). Disordered stretches follow at residues 61–80 (TNTP…PISP) and 151–180 (QRSR…YPTA). One can recognise a GRAS domain in the interval 192-571 (ELREDPQIIV…RKLISASAWH (380 aa)). The leucine repeat I (LRI) stretch occupies residues 199–259 (IIVKQLLTRC…VARHGNSGTN (61 aa)). The tract at residues 278–343 (MRILYNICPY…GGPPRVRITG (66 aa)) is VHIID. A VHIID motif is present at residues 309–313 (IHIID). The interval 359 to 391 (IVGKMLKSMSEEFKIPLEFTPLSVYATQVTKEM) is leucine repeat II (LRII). A PFYRE region spans residues 400–494 (LSVNFTLQLH…QHCLAKDIVN (95 aa)). Positions 497–571 (ACEGKDRVER…RKLISASAWH (75 aa)) are SAW.

The protein belongs to the GRAS family.

It localises to the nucleus. Functionally, may play a regulatory role in the early step of oligosaccharide elicitor response, downstream of the membrane-associated high-affinity chitin-binding protein. The polypeptide is Chitin-inducible gibberellin-responsive protein 1 (CIGR1) (Oryza sativa subsp. japonica (Rice)).